We begin with the raw amino-acid sequence, 460 residues long: tRNA modification GTPase MnmE (460 aa).

3 residues coordinate (6S)-5-formyl-5,6,7,8-tetrahydrofolate: Arg29, Glu91, and Lys132. The TrmE-type G domain occupies 227-383 (GISIALIGKT…LIDTIIKKCG (157 aa)). Asn237 is a K(+) binding site. Residues 237-242 (NVGKSS), 256-262 (TNIPGTT), and 281-284 (DTAG) contribute to the GTP site. Ser241 is a Mg(2+) binding site. The K(+) site is built by Thr256, Ile258, and Thr261. Position 262 (Thr262) interacts with Mg(2+). Lys460 provides a ligand contact to (6S)-5-formyl-5,6,7,8-tetrahydrofolate.

Belongs to the TRAFAC class TrmE-Era-EngA-EngB-Septin-like GTPase superfamily. TrmE GTPase family. Homodimer. Heterotetramer of two MnmE and two MnmG subunits. Requires K(+) as cofactor.

Its subcellular location is the cytoplasm. Its function is as follows. Exhibits a very high intrinsic GTPase hydrolysis rate. Involved in the addition of a carboxymethylaminomethyl (cmnm) group at the wobble position (U34) of certain tRNAs, forming tRNA-cmnm(5)s(2)U34. This is tRNA modification GTPase MnmE from Prochlorococcus marinus (strain AS9601).